The primary structure comprises 239 residues: Ubiquinone biosynthesis O-methyltransferase (239 aa).

Residues arginine 44, glycine 63, aspartate 84, and methionine 128 each contribute to the S-adenosyl-L-methionine site.

This sequence belongs to the methyltransferase superfamily. UbiG/COQ3 family.

The catalysed reaction is a 3-demethylubiquinol + S-adenosyl-L-methionine = a ubiquinol + S-adenosyl-L-homocysteine + H(+). It catalyses the reaction a 3-(all-trans-polyprenyl)benzene-1,2-diol + S-adenosyl-L-methionine = a 2-methoxy-6-(all-trans-polyprenyl)phenol + S-adenosyl-L-homocysteine + H(+). It functions in the pathway cofactor biosynthesis; ubiquinone biosynthesis. Its function is as follows. O-methyltransferase that catalyzes the 2 O-methylation steps in the ubiquinone biosynthetic pathway. This chain is Ubiquinone biosynthesis O-methyltransferase, found in Xanthomonas axonopodis pv. citri (strain 306).